The primary structure comprises 194 residues: E3 ubiquitin-protein ligase RNF185 (194 aa).

Positions 1–32 (MASKGPTTSASTKSSSTGGTSGSSSSNGAGDN) are disordered. The required for ubiquitin ligase activity and protection against ER stress-induced cell death stretch occupies residues 31–82 (DNTNQDNTFECNICLDTAKDAVISLCGHLFCWPCLHQWLETRPNRQVCPVCK). Residues 41 to 82 (CNICLDTAKDAVISLCGHLFCWPCLHQWLETRPNRQVCPVCK) form an RING-type zinc finger. Positions 92–125 (PLYGRGSTGQQDPREKTPPRPQGQRPEPENRGGF) are disordered. 2 consecutive transmembrane segments (helical) span residues 133–153 (GGFQ…ATAF) and 174–194 (QFLS…LLIA).

It localises to the mitochondrion outer membrane. Its subcellular location is the endoplasmic reticulum membrane. It catalyses the reaction S-ubiquitinyl-[E2 ubiquitin-conjugating enzyme]-L-cysteine + [acceptor protein]-L-lysine = [E2 ubiquitin-conjugating enzyme]-L-cysteine + N(6)-ubiquitinyl-[acceptor protein]-L-lysine.. It participates in protein modification; protein ubiquitination. In terms of biological role, E3 ubiquitin-protein ligase that regulates selective mitochondrial autophagy by mediating 'Lys-63'-linked polyubiquitination. Acts in the endoplasmic reticulum (ER)-associated degradation (ERAD) pathway, which targets misfolded proteins that accumulate in the endoplasmic reticulum (ER) for ubiquitination and subsequent proteasome-mediated degradation. Protects cells from ER stress-induced apoptosis. Responsible for the cotranslational ubiquitination and degradation of CFTR in the ERAD pathway. Also acts as a regulator of the innate antiviral response by catalyzing 'Lys-27'-linked polyubiquitination of CGAS, thereby promoting CGAS cyclic GMP-AMP synthase activity. Preferentially associates with the E2 enzymes UBE2J1 and UBE2J2. In Gallus gallus (Chicken), this protein is E3 ubiquitin-protein ligase RNF185 (RNF185).